The primary structure comprises 63 residues: Large ribosomal subunit protein uL29 (63 aa).

This sequence belongs to the universal ribosomal protein uL29 family.

The chain is Large ribosomal subunit protein uL29 from Stutzerimonas stutzeri (strain A1501) (Pseudomonas stutzeri).